The chain runs to 149 residues: Urease accessory protein UreE (149 aa).

This sequence belongs to the UreE family.

It is found in the cytoplasm. Involved in urease metallocenter assembly. Binds nickel. Probably functions as a nickel donor during metallocenter assembly. In Prochlorococcus marinus (strain AS9601), this protein is Urease accessory protein UreE.